Consider the following 461-residue polypeptide: Alcaligin biosynthesis enzyme (461 aa).

9-15 lines the FAD pocket; that stretch reads VAIGIGP.

The protein belongs to the lysine N(6)-hydroxylase/L-ornithine N(5)-oxygenase family. FAD serves as cofactor.

It participates in siderophore biosynthesis; alcaligin biosynthesis. This Bordetella bronchiseptica (strain ATCC BAA-588 / NCTC 13252 / RB50) (Alcaligenes bronchisepticus) protein is Alcaligin biosynthesis enzyme (alcA).